The chain runs to 349 residues: Two pore potassium channel b (349 aa).

The interval 1–53 (MAALDQQPLLHDGGDQKPPPEGAARRFRRCRTAPSSEPPPTDKDNSSAADAPP) is disordered. Over 1–66 (MAALDQQPLL…FTGGGRPSFR (66 aa)) the chain is Cytoplasmic. Residues 67–87 (LVGLLLVAYLLLGTIAFYLAM) traverse the membrane as a helical segment. Positions 100-119 (DALYFCVVTMTTVGYGDLVP) form an intramembrane region, pore-forming. Residues 123 to 143 (AAKLLACAFVFAGVAVVGTFL) traverse the membrane as a helical segment. Residues 144–180 (SKAADYLVEKQEALLFRALHSHTMVRAMEMNKVRYKL) lie on the Cytoplasmic side of the membrane. A helical transmembrane segment spans residues 181–201 (YTAGLLLVAAVASGTVVLWKV). An intramembrane region (pore-forming) is located at residues 208-227 (DAFYCVCATVTTLGYGDRSF). A helical transmembrane segment spans residues 234-254 (AFAVAWITVSTVVVALFFLYA). Over 255–349 (AELYTERRQR…PTPDPPPSLR (95 aa)) the chain is Cytoplasmic. EF-hand domains lie at 271-306 (LRRRTTNMDLEAADLDGDHRVGAADFVLYKLKELGK) and 310-345 (EDISEFLDEFDNLDADHSGTLSPADLAAAQPTPDPP). Residues D284, D286, D288, R290, D295, D323, D325, S327, T329, and D334 each contribute to the Ca(2+) site. Residues 326 to 349 (HSGTLSPADLAAAQPTPDPPPSLR) form a disordered region.

The protein belongs to the two pore domain potassium channel (TC 1.A.1.7) family. Homodimer.

The protein localises to the vacuole membrane. Highly selective inward-rectifying potassium channel that is specifically located in the tonoplast of protein storage vacuoles. Functions independently of the voltage difference across the membrane. The polypeptide is Two pore potassium channel b (TPKB) (Oryza sativa subsp. japonica (Rice)).